The following is a 195-amino-acid chain: Protein GrpE (195 aa).

Residues 1–20 (MSSKEQKTPDEQVLDQKEAA) show a composition bias toward basic and acidic residues. Residues 1–40 (MSSKEQKTPDEQVLDQKEAAKGQQADAAPETADVADPRDA) are disordered.

The protein belongs to the GrpE family. Homodimer.

The protein resides in the cytoplasm. Participates actively in the response to hyperosmotic and heat shock by preventing the aggregation of stress-denatured proteins, in association with DnaK and GrpE. It is the nucleotide exchange factor for DnaK and may function as a thermosensor. Unfolded proteins bind initially to DnaJ; upon interaction with the DnaJ-bound protein, DnaK hydrolyzes its bound ATP, resulting in the formation of a stable complex. GrpE releases ADP from DnaK; ATP binding to DnaK triggers the release of the substrate protein, thus completing the reaction cycle. Several rounds of ATP-dependent interactions between DnaJ, DnaK and GrpE are required for fully efficient folding. This Pectobacterium carotovorum subsp. carotovorum (strain PC1) protein is Protein GrpE.